The chain runs to 312 residues: Aspartate carbamoyltransferase catalytic subunit (312 aa).

Positions 58 and 59 each coordinate carbamoyl phosphate. Lysine 86 serves as a coordination point for L-aspartate. 3 residues coordinate carbamoyl phosphate: arginine 108, histidine 136, and glutamine 139. Arginine 169 and arginine 223 together coordinate L-aspartate. 2 residues coordinate carbamoyl phosphate: glycine 264 and proline 265.

Belongs to the aspartate/ornithine carbamoyltransferase superfamily. ATCase family. In terms of assembly, heterododecamer (2C3:3R2) of six catalytic PyrB chains organized as two trimers (C3), and six regulatory PyrI chains organized as three dimers (R2).

The catalysed reaction is carbamoyl phosphate + L-aspartate = N-carbamoyl-L-aspartate + phosphate + H(+). Its pathway is pyrimidine metabolism; UMP biosynthesis via de novo pathway; (S)-dihydroorotate from bicarbonate: step 2/3. In terms of biological role, catalyzes the condensation of carbamoyl phosphate and aspartate to form carbamoyl aspartate and inorganic phosphate, the committed step in the de novo pyrimidine nucleotide biosynthesis pathway. This is Aspartate carbamoyltransferase catalytic subunit from Syntrophomonas wolfei subsp. wolfei (strain DSM 2245B / Goettingen).